A 430-amino-acid polypeptide reads, in one-letter code: Histidine--tRNA ligase (430 aa).

This sequence belongs to the class-II aminoacyl-tRNA synthetase family. As to quaternary structure, homodimer.

It localises to the cytoplasm. The catalysed reaction is tRNA(His) + L-histidine + ATP = L-histidyl-tRNA(His) + AMP + diphosphate + H(+). The protein is Histidine--tRNA ligase of Acinetobacter baylyi (strain ATCC 33305 / BD413 / ADP1).